A 105-amino-acid chain; its full sequence is uncharacterized protein (105 aa).

This is an uncharacterized protein from Microplitis demolitor (Parasitoid wasp).